The chain runs to 121 residues: Basic phospholipase A2 daboxin P (121 aa).

7 disulfide bridges follow: Cys26-Cys115, Cys28-Cys44, Cys43-Cys95, Cys49-Cys121, Cys50-Cys88, Cys57-Cys81, and Cys75-Cys86. Residues Tyr27, Gly29, and Gly31 each contribute to the Ca(2+) site. The active site involves His47. Asp48 contacts Ca(2+). The active site involves Asp89.

Ca(2+) serves as cofactor. In terms of tissue distribution, expressed by the venom gland.

Its subcellular location is the secreted. The enzyme catalyses a 1,2-diacyl-sn-glycero-3-phosphocholine + H2O = a 1-acyl-sn-glycero-3-phosphocholine + a fatty acid + H(+). Functionally, snake venom phospholipase A2 (PLA2) that exhibits anticoagulant activity, probably by binding to factor X and its activated form factor Xa (F10). Shows no cytotoxicity. PLA2 catalyzes the calcium-dependent hydrolysis of the 2-acyl groups in 3-sn-phosphoglycerides. The protein is Basic phospholipase A2 daboxin P of Daboia russelii (Russel's viper).